The following is a 295-amino-acid chain: Protein gurken (295 aa).

A signal peptide spans 1–26 (MMQIPFTRIFKVIFVLSTIVAVTDCC). Topologically, residues 27-247 (SSRILLLREH…TAQRKVRMAH (221 aa)) are extracellular. Disordered stretches follow at residues 78–111 (EASA…SIAA) and 124–175 (TDTW…NDKE). The segment covering 124 to 139 (TDTWLASESSTPITDS) has biased composition (polar residues). 2 stretches are compositionally biased toward low complexity: residues 140-152 (ETVT…THTG) and 159-171 (SSSS…TPSP). The 46-residue stretch at 179-224 (QMLPCSEAYNTSFCLNGGHCFQHPMVNNTVFHSCLCVNDYDGERCA) folds into the EGF-like domain. Cystine bridges form between cysteine 183–cysteine 198, cysteine 192–cysteine 212, and cysteine 214–cysteine 223. Asparagine 188 and asparagine 205 each carry an N-linked (GlcNAc...) asparagine glycan. An interaction with cni region spans residues 215–245 (VNDYDGERCAYKSWNGDYIYSPPTAQRKVRM). A helical transmembrane segment spans residues 248-268 (IVFSFPVLLMLSSLYVLFAAV). At 269 to 295 (FMLRNVPDYRRKQQQLHLHKQRFFVRC) the chain is on the cytoplasmic side.

In terms of assembly, interacts with cni. As to expression, expressed in nurse cells and oocyte up to oogenesis stage 7. Specifically accumulates in dorsal anterior corner of the oocyte during stages 9/10, at later stages expression is seen as an anterior ring. In stage 10 ovaries, it is concentrated between the oocyte nucleus and the adjacent oolemma. During vitellogenesis stage it can be detected at the oocyte surface, especially on the microvilli. It is also found at the microvilli covering the apical surface of the follicular epithelium and within follicle cells.

Its subcellular location is the cell membrane. Critical for defining the anterior-posterior and dorsal-ventral axes of the egg. May signal directly to dorsal follicle cells through the receptor torpedo (top). During oogenesis this signaling pathway instructs follicle cells to follow a dorsal pathway of development rather than the default ventral pathway. This chain is Protein gurken (grk), found in Drosophila melanogaster (Fruit fly).